Consider the following 203-residue polypeptide: uncharacterized protein (203 aa).

Residues 180 to 200 (VYLLLFGIPLLILIFLIIFFI) form a helical membrane-spanning segment.

The protein localises to the virion. It is found in the host membrane. This is an uncharacterized protein from Acanthamoeba polyphaga (Amoeba).